The sequence spans 254 residues: Thiazole synthase (254 aa).

K96 functions as the Schiff-base intermediate with DXP in the catalytic mechanism. 1-deoxy-D-xylulose 5-phosphate is bound by residues G157, 183-184 (AG), and 205-206 (NT).

It belongs to the ThiG family. In terms of assembly, homotetramer. Forms heterodimers with either ThiH or ThiS.

It localises to the cytoplasm. It catalyses the reaction [ThiS sulfur-carrier protein]-C-terminal-Gly-aminoethanethioate + 2-iminoacetate + 1-deoxy-D-xylulose 5-phosphate = [ThiS sulfur-carrier protein]-C-terminal Gly-Gly + 2-[(2R,5Z)-2-carboxy-4-methylthiazol-5(2H)-ylidene]ethyl phosphate + 2 H2O + H(+). It participates in cofactor biosynthesis; thiamine diphosphate biosynthesis. Its function is as follows. Catalyzes the rearrangement of 1-deoxy-D-xylulose 5-phosphate (DXP) to produce the thiazole phosphate moiety of thiamine. Sulfur is provided by the thiocarboxylate moiety of the carrier protein ThiS. In vitro, sulfur can be provided by H(2)S. The chain is Thiazole synthase from Clostridium perfringens (strain SM101 / Type A).